Here is a 511-residue protein sequence, read N- to C-terminus: Histidine ammonia-lyase (511 aa).

Positions 142–144 (ASG) form a cross-link, 5-imidazolinone (Ala-Gly). Position 143 is a 2,3-didehydroalanine (Ser) (Ser-143).

Belongs to the PAL/histidase family. Post-translationally, contains an active site 4-methylidene-imidazol-5-one (MIO), which is formed autocatalytically by cyclization and dehydration of residues Ala-Ser-Gly.

The protein localises to the cytoplasm. The enzyme catalyses L-histidine = trans-urocanate + NH4(+). The protein operates within amino-acid degradation; L-histidine degradation into L-glutamate; N-formimidoyl-L-glutamate from L-histidine: step 1/3. This Caulobacter sp. (strain K31) protein is Histidine ammonia-lyase.